Reading from the N-terminus, the 78-residue chain is NAD(P)H-quinone oxidoreductase subunit L (78 aa).

2 consecutive transmembrane segments (helical) span residues 10-30 (LFVIGTYLFLGTLYLVFIPLG) and 48-68 (LLIYSLVFLFFPGLILFAPFL).

This sequence belongs to the complex I NdhL subunit family. As to quaternary structure, NDH-1 can be composed of about 15 different subunits; different subcomplexes with different compositions have been identified which probably have different functions.

It localises to the cellular thylakoid membrane. The catalysed reaction is a plastoquinone + NADH + (n+1) H(+)(in) = a plastoquinol + NAD(+) + n H(+)(out). It catalyses the reaction a plastoquinone + NADPH + (n+1) H(+)(in) = a plastoquinol + NADP(+) + n H(+)(out). In terms of biological role, NDH-1 shuttles electrons from an unknown electron donor, via FMN and iron-sulfur (Fe-S) centers, to quinones in the respiratory and/or the photosynthetic chain. The immediate electron acceptor for the enzyme in this species is believed to be plastoquinone. Couples the redox reaction to proton translocation, and thus conserves the redox energy in a proton gradient. Cyanobacterial NDH-1 also plays a role in inorganic carbon-concentration. The chain is NAD(P)H-quinone oxidoreductase subunit L from Prochlorococcus marinus (strain SARG / CCMP1375 / SS120).